Reading from the N-terminus, the 214-residue chain is Calcineurin B homologous protein 3 (214 aa).

Residue Gly2 is the site of N-myristoyl glycine attachment. Residues Phe110 to Gly145 enclose the EF-hand domain. Residues Asp123, Asp125, Asp127, and Glu134 each coordinate Ca(2+).

This sequence belongs to the calcineurin regulatory subunit family. CHP subfamily. In terms of assembly, monomer. Homodimer. In terms of tissue distribution, expressed in the bipotential gonad by E4.5 and expressed in both the testis and ovary by E5.5, but with expression higher in the testis. Expressed in the testis cords but also at low levels in the interstitium. In the ovary, expression is principally in the ovarian cortex, but also in the medulla. Also expressed in the embryonic brain, with expression highest in the region between the nasal placode and olfactory bulb. Also expressed in the embryonic heart and tail.

It is found in the nucleus. Its subcellular location is the cytoplasm. The protein localises to the membrane. The protein resides in the cell membrane. It localises to the cell projection. It is found in the lamellipodium. Its subcellular location is the ruffle membrane. Functions as an integral cofactor in cell pH regulation by controlling plasma membrane-type Na(+)/H(+) exchange activity. Promotes the induction of hematopoietic stem cell differentiation toward megakaryocytic lineage. Essential for the coupling of ERK cascade activation with the expression of ETS family genes in megakaryocytic differentiation. Also involved in granulocytic differentiation in a ERK-dependent manner. Inhibits the phosphatase activity of calcineurin. The protein is Calcineurin B homologous protein 3 of Gallus gallus (Chicken).